The primary structure comprises 181 residues: Large ribosomal subunit protein uL5 (181 aa).

Belongs to the universal ribosomal protein uL5 family. In terms of assembly, part of the 50S ribosomal subunit; part of the 5S rRNA/L5/L18/L25 subcomplex. Contacts the 5S rRNA and the P site tRNA. Forms a bridge to the 30S subunit in the 70S ribosome.

This is one of the proteins that bind and probably mediate the attachment of the 5S RNA into the large ribosomal subunit, where it forms part of the central protuberance. In the 70S ribosome it contacts protein S13 of the 30S subunit (bridge B1b), connecting the 2 subunits; this bridge is implicated in subunit movement. Contacts the P site tRNA; the 5S rRNA and some of its associated proteins might help stabilize positioning of ribosome-bound tRNAs. The sequence is that of Large ribosomal subunit protein uL5 from Clostridium kluyveri (strain NBRC 12016).